The chain runs to 101 residues: Urease subunit beta (101 aa).

It belongs to the urease beta subunit family. Heterotrimer of UreA (gamma), UreB (beta) and UreC (alpha) subunits. Three heterotrimers associate to form the active enzyme.

The protein localises to the cytoplasm. It catalyses the reaction urea + 2 H2O + H(+) = hydrogencarbonate + 2 NH4(+). The protein operates within nitrogen metabolism; urea degradation; CO(2) and NH(3) from urea (urease route): step 1/1. This chain is Urease subunit beta, found in Cupriavidus metallidurans (strain ATCC 43123 / DSM 2839 / NBRC 102507 / CH34) (Ralstonia metallidurans).